A 214-amino-acid polypeptide reads, in one-letter code: MGRRPARCYRYIKNKPYPKSRFCRGVPDAKIRIFDLGNKRANVDTFPACVHMMSNEREHLSSEALEAARICANKYMVKNCGKDGFHLRVRKHPFHVTRINKMLSCAGADRLQTGMRGAYGKPQGLVARVDIGDILFSMRIKEGNVKHAIEAFRRAKFKFPGRQIIVSSRKWGFTKWDREDYERMRAEGRLRSDGVGVQLQREHGPLTKWIENPI.

Belongs to the universal ribosomal protein uL16 family. In terms of assembly, component of the large ribosomal subunit. Mature ribosomes consist of a small (40S) and a large (60S) subunit. The 40S subunit contains about 33 different proteins and 1 molecule of RNA (18S). The 60S subunit contains about 49 different proteins and 3 molecules of RNA (28S, 5.8S and 5S).

This is Large ribosomal subunit protein uL16 (rpl-10L) from Caenorhabditis elegans.